Consider the following 326-residue polypeptide: MEKDGLCRADQQYECVAEIGEGAYGKVFKARDLKNGGRFVALKRVRVQTGEEGMPLSTIREVAVLRHLETFEHPNVVRLFDVCTVSRTDRETKLTLVFEHVDQDLTTYLDKVPEPGVPTETIKDMMFQLLRGLDFLHSHRVVHRDLKPQNILVTSSGQIKLADFGLARIYSFQMALTSVVVTLWYRAPEVLLQSSYATPVDLWSVGCIFAEMFRRKPLFRGSSDVDQLGKILDVIGLPGEEDWPRDVALPRQAFHSKSAQPIEKFVTDIDELGKDLLLKCLTFNPAKRISAYSALSHPYFQDLERCKENLDSHLPPSQNTSELNTA.

Position 1 is an N-acetylmethionine (M1). A phosphotyrosine mark is found at Y13 and Y24. One can recognise a Protein kinase domain in the interval 13–300 (YECVAEIGEG…AYSALSHPYF (288 aa)). ATP contacts are provided by residues 19–27 (IGEGAYGKV) and K43. 2 positions are modified to phosphothreonine: T49 and T70. The active-site Proton acceptor is the D145. Position 177 is a phosphothreonine (T177). Position 264 is an N6-acetyllysine (K264). Residue T325 is modified to Phosphothreonine.

Belongs to the protein kinase superfamily. CMGC Ser/Thr protein kinase family. CDC2/CDKX subfamily. As to quaternary structure, interaction with D-type G1 cyclins. Cyclin binding promotes enzyme activation by phosphorylation at Thr-177. Binds to RUNX1, CDKN2D, FBXO7 and CDKN2C/p18-INK4c. Forms a cytoplasmic complex with Hsp90/HSP90AB1 and CDC37. FBXO7-binding promotes D-type cyclin binding. Interacts with Kaposi's sarcoma herpesvirus (KSHV) V-cyclin and herpesvirus saimiri (V-cyclin/ECLF2); the CDK6/V-cyclin complex phosphorylates NPM1 and thus lead to viral reactivation by reducing viral LANA levels. Post-translationally, thr-177 phosphorylation and Tyr-24 dephosphorylation promotes kinase activity. As to expression, expressed ubiquitously. Accumulates in squamous cell carcinomas, proliferating hematopoietic progenitor cells, beta-cells of pancreatic islets of Langerhans, and neuroblastomas. Reduced levels in differentiating cells.

It localises to the cytoplasm. Its subcellular location is the nucleus. It is found in the cell projection. The protein localises to the ruffle. The protein resides in the cytoskeleton. It localises to the microtubule organizing center. Its subcellular location is the centrosome. It catalyses the reaction L-seryl-[protein] + ATP = O-phospho-L-seryl-[protein] + ADP + H(+). The enzyme catalyses L-threonyl-[protein] + ATP = O-phospho-L-threonyl-[protein] + ADP + H(+). Inhibited by INK4 proteins (CDKN2C/p18-INK4c), aminopurvalanol, PD0332991, 4-(Pyrazol-4-yl)-pyrimidines and fisetin, a flavonol inhibitor. Activated by Thr-177 phosphorylation and Tyr-24 dephosphorylation. Stimulated by cyclin from herpesvirus saimiri (V-cyclin/ECLF2). Rapidly down-regulated prior to cell differentiation (e.g. erythroid and osteoblast). Serine/threonine-protein kinase involved in the control of the cell cycle and differentiation; promotes G1/S transition. Phosphorylates pRB/RB1 and NPM1. Interacts with D-type G1 cyclins during interphase at G1 to form a pRB/RB1 kinase and controls the entrance into the cell cycle. Involved in initiation and maintenance of cell cycle exit during cell differentiation; prevents cell proliferation and negatively regulates cell differentiation, but is required for the proliferation of specific cell types (e.g. erythroid and hematopoietic cells). Essential for cell proliferation within the dentate gyrus of the hippocampus and the subventricular zone of the lateral ventricles. Required during thymocyte development. Promotes the production of newborn neurons, probably by modulating G1 length. Promotes, at least in astrocytes, changes in patterns of gene expression, changes in the actin cytoskeleton including loss of stress fibers, and enhanced motility during cell differentiation. Prevents myeloid differentiation by interfering with RUNX1 and reducing its transcription transactivation activity, but promotes proliferation of normal myeloid progenitors. Delays senescence. Promotes the proliferation of beta-cells in pancreatic islets of Langerhans. May play a role in the centrosome organization during the cell cycle phases. In Homo sapiens (Human), this protein is Cyclin-dependent kinase 6 (CDK6).